The sequence spans 508 residues: DDB1- and CUL4-associated factor 10 (508 aa).

A disordered region spans residues Met-1–Gly-75. A compositionally biased stretch (basic and acidic residues) spans Ser-7–Leu-17. Residues Arg-18–Glu-32 are compositionally biased toward acidic residues. The segment covering Gly-63–Gly-75 has biased composition (gly residues). 4 WD repeats span residues Gln-126 to Thr-165, Ala-169 to Cys-207, Gly-211 to Cys-250, and Phe-256 to Glu-295. Positions Pro-307–Ser-343 are disordered. Residues His-325–Leu-338 show a composition bias toward basic and acidic residues. WD repeat units lie at residues Asp-356 to Ala-396, Val-419 to Val-457, and Ser-475 to Phe-508.

It belongs to the WD repeat DCAF10 family.

It participates in protein modification; protein ubiquitination. Functionally, may function as a substrate receptor for CUL4-DDB1 E3 ubiquitin-protein ligase complex. The protein is DDB1- and CUL4-associated factor 10 (dcaf10) of Danio rerio (Zebrafish).